The following is a 123-amino-acid chain: Large ribosomal subunit protein uL14 (123 aa).

The protein belongs to the universal ribosomal protein uL14 family. As to quaternary structure, part of the 50S ribosomal subunit. Forms a cluster with proteins L3 and L19. In the 70S ribosome, L14 and L19 interact and together make contacts with the 16S rRNA in bridges B5 and B8.

In terms of biological role, binds to 23S rRNA. Forms part of two intersubunit bridges in the 70S ribosome. The chain is Large ribosomal subunit protein uL14 from Tropheryma whipplei (strain TW08/27) (Whipple's bacillus).